The chain runs to 442 residues: Proline--tRNA ligase (442 aa).

Belongs to the class-II aminoacyl-tRNA synthetase family. ProS type 2 subfamily. In terms of assembly, homodimer.

It is found in the cytoplasm. It carries out the reaction tRNA(Pro) + L-proline + ATP = L-prolyl-tRNA(Pro) + AMP + diphosphate. Catalyzes the attachment of proline to tRNA(Pro) in a two-step reaction: proline is first activated by ATP to form Pro-AMP and then transferred to the acceptor end of tRNA(Pro). The polypeptide is Proline--tRNA ligase (Mesorhizobium japonicum (strain LMG 29417 / CECT 9101 / MAFF 303099) (Mesorhizobium loti (strain MAFF 303099))).